We begin with the raw amino-acid sequence, 449 residues long: mRNA-capping enzyme subunit alpha (449 aa).

The N6-GMP-lysine intermediate role is filled by K66. The tract at residues 405-449 (DERKNGAYQHHSSSFSESRQQPKAEPVAEKKQTEPKYVDDDDWSD) is disordered. The segment covering 414–423 (HHSSSFSESR) has biased composition (polar residues). A compositionally biased stretch (basic and acidic residues) spans 424–442 (QQPKAEPVAEKKQTEPKYV).

The protein belongs to the eukaryotic GTase family. As to quaternary structure, heterodimer. The mRNA-capping enzyme is composed of two separate chains alpha and beta, respectively a mRNA guanylyltransferase and an mRNA 5'-triphosphate monophosphatase.

It localises to the nucleus. The catalysed reaction is a 5'-end diphospho-ribonucleoside in mRNA + GTP + H(+) = a 5'-end (5'-triphosphoguanosine)-ribonucleoside in mRNA + diphosphate. Functionally, second step of mRNA capping. Transfer of the GMP moiety of GTP to the 5'-end of RNA via an enzyme-GMP covalent reaction intermediate. The polypeptide is mRNA-capping enzyme subunit alpha (CEG1) (Candida glabrata (strain ATCC 2001 / BCRC 20586 / JCM 3761 / NBRC 0622 / NRRL Y-65 / CBS 138) (Yeast)).